The following is a 139-amino-acid chain: Protein shisa-5 (139 aa).

Residues 3 to 23 (FGTLVAIGVIVFAVVVITIIL) traverse the membrane as a helical segment.

Belongs to the shisa family.

The protein localises to the endoplasmic reticulum membrane. The protein resides in the nucleus membrane. Can induce apoptosis in a caspase-dependent manner and plays a role in p53/TP53-dependent apoptosis. In Gallus gallus (Chicken), this protein is Protein shisa-5 (Shisa5).